Consider the following 608-residue polypeptide: Elongation factor 4 (608 aa).

Positions 11–193 (DHIRNFSIVA…AIVNRLPPPK (183 aa)) constitute a tr-type G domain. GTP is bound by residues 23-28 (DHGKST) and 140-143 (NKID).

Belongs to the TRAFAC class translation factor GTPase superfamily. Classic translation factor GTPase family. LepA subfamily.

The protein resides in the cell inner membrane. The enzyme catalyses GTP + H2O = GDP + phosphate + H(+). Its function is as follows. Required for accurate and efficient protein synthesis under certain stress conditions. May act as a fidelity factor of the translation reaction, by catalyzing a one-codon backward translocation of tRNAs on improperly translocated ribosomes. Back-translocation proceeds from a post-translocation (POST) complex to a pre-translocation (PRE) complex, thus giving elongation factor G a second chance to translocate the tRNAs correctly. Binds to ribosomes in a GTP-dependent manner. The polypeptide is Elongation factor 4 (Agrobacterium fabrum (strain C58 / ATCC 33970) (Agrobacterium tumefaciens (strain C58))).